The following is a 299-amino-acid chain: Putative adenosine/adenine deaminase (299 aa).

The Zn(2+) site is built by H16 and H18. Substrate contacts are provided by H18 and G157. H184 lines the Zn(2+) pocket. E187 acts as the Proton donor in catalysis. Zn(2+) is bound at residue D265. D266 provides a ligand contact to substrate.

The protein belongs to the metallo-dependent hydrolases superfamily. Adenosine and AMP deaminases family. The cofactor is Zn(2+).

Its function is as follows. Putative nucleoside deaminase. May catalyze the hydrolytic deamination of adenosine or some similar substrate and play a role in purine metabolism. This chain is Putative adenosine/adenine deaminase, found in Treponema pallidum (strain Nichols).